Reading from the N-terminus, the 422-residue chain is Elongation factor 1-alpha (422 aa).

The tr-type G domain occupies 5-221 (KPHMNLAVIG…NSLKEPEKPS (217 aa)). The interval 14-21 (GHIDHGKS) is G1. Residue 14-21 (GHIDHGKS) coordinates GTP. Ser-21 provides a ligand contact to Mg(2+). The segment at 70-74 (GITID) is G2. The tract at residues 91 to 94 (DCPG) is G3. Residues 91 to 95 (DCPGH) and 146 to 149 (NKMD) each bind GTP. The segment at 146-149 (NKMD) is G4. A G5 region spans residues 185–187 (SAF).

The protein belongs to the TRAFAC class translation factor GTPase superfamily. Classic translation factor GTPase family. EF-Tu/EF-1A subfamily.

The protein localises to the cytoplasm. It carries out the reaction GTP + H2O = GDP + phosphate + H(+). Its function is as follows. GTP hydrolase that promotes the GTP-dependent binding of aminoacyl-tRNA to the A-site of ribosomes during protein biosynthesis. The protein is Elongation factor 1-alpha of Methanosarcina mazei (strain ATCC BAA-159 / DSM 3647 / Goe1 / Go1 / JCM 11833 / OCM 88) (Methanosarcina frisia).